The primary structure comprises 588 residues: Sentrin-specific protease 2 (588 aa).

Residues Lys28 to Arg31 carry the Nuclear localization signal motif. Residue Ser32 is modified to Phosphoserine. The short motif at Pro47–Arg52 is the Nuclear localization signal element. Residues Gly72–His381 are axin-binding. The interval Glu157–Gln184 is disordered. A Nuclear export signal motif is present at residues Leu316 to Gly331. Phosphoserine occurs at positions 332 and 343. Positions Leu394 to Ile558 are protease. Catalysis depends on residues His477 and Asp494. The active-site Nucleophile is the Cys547.

The protein belongs to the peptidase C48 family. As to quaternary structure, binds to SUMO2 and SUMO3. Interacts with the C-terminal domain of NUP153 via its N-terminus. Interacts with MTA1. Binds to AXIN1. Post-translationally, polyubiquitinated; which leads to proteasomal degradation. In terms of tissue distribution, ubiquitous. Highly expressed in brain, lung and testis.

Its subcellular location is the nucleus. It is found in the nuclear pore complex. The protein localises to the nucleus membrane. The protein resides in the cytoplasm. Protease that catalyzes two essential functions in the SUMO pathway. The first is the hydrolysis of an alpha-linked peptide bond at the C-terminal end of the small ubiquitin-like modifier (SUMO) propeptides, SUMO1, SUMO2 and SUMO3 leading to the mature form of the proteins. The second is the deconjugation of SUMO1, SUMO2 and SUMO3 from targeted proteins, by cleaving an epsilon-linked peptide bond between the C-terminal glycine of the mature SUMO and the lysine epsilon-amino group of the target protein. May down-regulate CTNNB1 levels and thereby modulate the Wnt pathway. Deconjugates SUMO2 from MTA1. Plays a dynamic role in adipogenesis by desumoylating and promoting the stabilization of CEBPB. Acts as a regulator of the cGAS-STING pathway by catalyzing desumoylation of CGAS and STING1 during the late phase of viral infection. This is Sentrin-specific protease 2 (Senp2) from Rattus norvegicus (Rat).